The primary structure comprises 306 residues: CRISPR-associated endonuclease Cas1 (306 aa).

Mn(2+) contacts are provided by Glu143, His210, and Asp223.

Belongs to the CRISPR-associated endonuclease Cas1 family. In terms of assembly, homodimer, forms a heterotetramer with a Cas2 homodimer. It depends on Mg(2+) as a cofactor. Mn(2+) is required as a cofactor.

CRISPR (clustered regularly interspaced short palindromic repeat), is an adaptive immune system that provides protection against mobile genetic elements (viruses, transposable elements and conjugative plasmids). CRISPR clusters contain spacers, sequences complementary to antecedent mobile elements, and target invading nucleic acids. CRISPR clusters are transcribed and processed into CRISPR RNA (crRNA). Acts as a dsDNA endonuclease. Involved in the integration of spacer DNA into the CRISPR cassette. The sequence is that of CRISPR-associated endonuclease Cas1 from Geobacter sulfurreducens (strain ATCC 51573 / DSM 12127 / PCA).